Reading from the N-terminus, the 498-residue chain is Histone-lysine N-methyltransferase SET5 (498 aa).

Residues 68 to 94 (KPNDGCTSRSTSCPGGKKKKKSKTDTS) are disordered. The region spanning 108–415 (AGIRGVYFDP…PDDELVISYI (308 aa)) is the SET domain.

This sequence belongs to the class V-like SAM-binding methyltransferase superfamily. Histone-lysine methyltransferase family. SET5 subfamily.

Its subcellular location is the nucleus. The protein localises to the chromosome. The protein resides in the cytoplasm. The catalysed reaction is L-lysyl-[histone] + S-adenosyl-L-methionine = N(6)-methyl-L-lysyl-[histone] + S-adenosyl-L-homocysteine + H(+). Histone methyltransferase that monomethylates 'Lys-5', 'Lys-8' and 'Lys-12' of histone H4 (H4K5me1, H4K8me1 and H4K12me1, respectively), thereby controlling gene expression and remodeling chromatin structures. The polypeptide is Histone-lysine N-methyltransferase SET5 (SET5) (Mycosarcoma maydis (Corn smut fungus)).